The following is a 468-amino-acid chain: Keratin, type I cytoskeletal 26 (468 aa).

The segment at 1–82 (MSFRLSGGSR…GNEHSLLSGN (82 aa)) is head. Residues 83–118 (EKVTMQNLNDRLASYLDHVHALEEANADLEQKIKGW) form a coil 1A region. The IF rod domain occupies 83 to 398 (EKVTMQNLND…NLLDGEERKS (316 aa)). Residues 119 to 140 (YEKCEPGSSREHDHDYSRYFSV) are linker 1. Positions 141–232 (IEDLKRQIIS…KSHEEEMEVL (92 aa)) are coil 1B. Positions 233 to 255 (QYTAGGNVNVEMNATPGVDLTVL) are linker 12. Residues 256-394 (LNNMRAEYED…DIYCNLLDGE (139 aa)) are coil 2. Residues 395–465 (ERKSKSTCYK…NITVEQRVPS (71 aa)) form a tail region.

It belongs to the intermediate filament family. In terms of assembly, heterotetramer of two type I and two type II keratins. In terms of tissue distribution, strongly expressed in skin and scalp, and weak expression observed in thymus and tongue. In the hair follicle, expression is restricted to the mid- to upper inner root sheath cuticle, being present slightly above the apex of the dermal papilla (at protein level).

The polypeptide is Keratin, type I cytoskeletal 26 (Homo sapiens (Human)).